A 319-amino-acid polypeptide reads, in one-letter code: Lipoyl synthase (319 aa).

Residues 1–12 (MVTIVDTLSNTP) show a composition bias toward polar residues. A disordered region spans residues 1–32 (MVTIVDTLSNTPLRPRHPEKANRPDSISPAKP). The [4Fe-4S] cluster site is built by Cys-61, Cys-66, Cys-72, Cys-87, Cys-91, Cys-94, and Ser-300. Residues 73-289 (WDKKHATFMI…ETVAYTKGFL (217 aa)) enclose the Radical SAM core domain.

It belongs to the radical SAM superfamily. Lipoyl synthase family. [4Fe-4S] cluster serves as cofactor.

The protein resides in the cytoplasm. It carries out the reaction [[Fe-S] cluster scaffold protein carrying a second [4Fe-4S](2+) cluster] + N(6)-octanoyl-L-lysyl-[protein] + 2 oxidized [2Fe-2S]-[ferredoxin] + 2 S-adenosyl-L-methionine + 4 H(+) = [[Fe-S] cluster scaffold protein] + N(6)-[(R)-dihydrolipoyl]-L-lysyl-[protein] + 4 Fe(3+) + 2 hydrogen sulfide + 2 5'-deoxyadenosine + 2 L-methionine + 2 reduced [2Fe-2S]-[ferredoxin]. It participates in protein modification; protein lipoylation via endogenous pathway; protein N(6)-(lipoyl)lysine from octanoyl-[acyl-carrier-protein]: step 2/2. Catalyzes the radical-mediated insertion of two sulfur atoms into the C-6 and C-8 positions of the octanoyl moiety bound to the lipoyl domains of lipoate-dependent enzymes, thereby converting the octanoylated domains into lipoylated derivatives. This chain is Lipoyl synthase, found in Bradyrhizobium sp. (strain BTAi1 / ATCC BAA-1182).